The following is a 226-amino-acid chain: Ribonuclease 3 (226 aa).

One can recognise an RNase III domain in the interval 6-128; that stretch reads INRLQRKLGY…LIGGVFLDSD (123 aa). Glu41 serves as a coordination point for Mg(2+). The active site involves Asp45. Mg(2+) is bound by residues Asp114 and Glu117. Residue Glu117 is part of the active site. The 71-residue stretch at 155-225 folds into the DRBM domain; it reads DPKTRLQEFL…AEQALIKLEL (71 aa).

The protein belongs to the ribonuclease III family. As to quaternary structure, homodimer. It depends on Mg(2+) as a cofactor.

The protein localises to the cytoplasm. The catalysed reaction is Endonucleolytic cleavage to 5'-phosphomonoester.. Its function is as follows. Digests double-stranded RNA. Involved in the processing of primary rRNA transcript to yield the immediate precursors to the large and small rRNAs (23S and 16S). Processes some mRNAs, and tRNAs when they are encoded in the rRNA operon. Processes pre-crRNA and tracrRNA of type II CRISPR loci if present in the organism. This chain is Ribonuclease 3, found in Serratia proteamaculans (strain 568).